The chain runs to 472 residues: Proline--tRNA ligase (472 aa).

The protein belongs to the class-II aminoacyl-tRNA synthetase family. ProS type 3 subfamily. Homodimer.

The protein resides in the cytoplasm. It catalyses the reaction tRNA(Pro) + L-proline + ATP = L-prolyl-tRNA(Pro) + AMP + diphosphate. Catalyzes the attachment of proline to tRNA(Pro) in a two-step reaction: proline is first activated by ATP to form Pro-AMP and then transferred to the acceptor end of tRNA(Pro). This is Proline--tRNA ligase from Ureaplasma urealyticum serovar 10 (strain ATCC 33699 / Western).